A 749-amino-acid chain; its full sequence is Transcription factor RFX3 (749 aa).

Positions 183-258 (HLQWLLDNYE…YHYYGIRVKP (76 aa)) form a DNA-binding region, RFX-type winged-helix. The disordered stretch occupies residues 663 to 699 (VSPGNLDKDEGSEVESETDEDLDDSSEPRAKREKTEL). The span at 674–687 (SEVESETDEDLDDS) shows a compositional bias: acidic residues. Over residues 688 to 698 (SEPRAKREKTE) the composition is skewed to basic and acidic residues.

It belongs to the RFX family. As to quaternary structure, heterodimer; heterodimerizes with RFX1 and RFX2, and RFX6. In terms of tissue distribution, expressed in ciliated cells of the node and in the ciliated ependymal cells of the subcommissural organ (SCO), choroid plexuses (CP) and ventricular walls during embryonic and postnatal development. Expressed in developing and mature pancreatic endocrine cells during embryogenesis and in adults (at protein level).

It localises to the nucleus. In terms of biological role, transcription factor required for ciliogenesis and islet cell differentiation during endocrine pancreas development. Essential for the differentiation of nodal monocilia and left-right asymmetry specification during embryogenesis. Required for the biogenesis of motile cilia by governing growth and beating efficiency of motile cells. Also required for ciliated ependymal cell differentiation. Together with RFX6, participates in the differentiation of 4 of the 5 islet cell types during endocrine pancreas development, with the exception of pancreatic PP (polypeptide-producing) cells. Regulates transcription by forming a heterodimer with another RFX protein and binding to the X-box in the promoter of target genes. Regulates the expression of genes involved in ciliary assembly (DYNC2LI1, FOXJ1 and BBS4) and genes involved in ciliary motility (DNAH11, DNAH9 and DNAH5). Represses transcription of MAP1A in non-neuronal cells but not in neuronal cells. This is Transcription factor RFX3 (Rfx3) from Mus musculus (Mouse).